The sequence spans 325 residues: Putative S-adenosyl-L-methionine-dependent methyltransferase MT0917 (325 aa).

S-adenosyl-L-methionine-binding positions include Asp126 and 155–156; that span reads DL.

The protein belongs to the UPF0677 family.

Exhibits S-adenosyl-L-methionine-dependent methyltransferase activity. In Mycobacterium tuberculosis (strain CDC 1551 / Oshkosh), this protein is Putative S-adenosyl-L-methionine-dependent methyltransferase MT0917.